The sequence spans 71 residues: uncharacterized protein (71 aa).

The tract at residues 1-20 is disordered; it reads MQKLNKHLKKKKQKRKKMKK.

This is an uncharacterized protein from Methanocaldococcus jannaschii (strain ATCC 43067 / DSM 2661 / JAL-1 / JCM 10045 / NBRC 100440) (Methanococcus jannaschii).